Consider the following 494-residue polypeptide: Cytochrome P450 2A3 (494 aa).

Serine 131 is subject to Phosphoserine. At lysine 379 the chain carries N6-acetyllysine. Cysteine 439 contacts heme.

This sequence belongs to the cytochrome P450 family. It depends on heme as a cofactor. Lung.

It localises to the endoplasmic reticulum membrane. The protein localises to the microsome membrane. It catalyses the reaction an organic molecule + reduced [NADPH--hemoprotein reductase] + O2 = an alcohol + oxidized [NADPH--hemoprotein reductase] + H2O + H(+). Its function is as follows. Cytochromes P450 are a group of heme-thiolate monooxygenases. In liver microsomes, this enzyme is involved in an NADPH-dependent electron transport pathway. It oxidizes a variety of structurally unrelated compounds, including steroids, fatty acids, and xenobiotics. The chain is Cytochrome P450 2A3 (Cyp2a3) from Rattus norvegicus (Rat).